Here is a 95-residue protein sequence, read N- to C-terminus: Protein TusB (95 aa).

This sequence belongs to the DsrH/TusB family. In terms of assembly, heterohexamer, formed by a dimer of trimers. The hexameric TusBCD complex contains 2 copies each of TusB, TusC and TusD. The TusBCD complex interacts with TusE.

The protein resides in the cytoplasm. Functionally, part of a sulfur-relay system required for 2-thiolation of 5-methylaminomethyl-2-thiouridine (mnm(5)s(2)U) at tRNA wobble positions. This chain is Protein TusB, found in Escherichia coli O81 (strain ED1a).